A 115-amino-acid polypeptide reads, in one-letter code: Putative gamma-glutamylcyclotransferase VC_2546 (115 aa).

8–11 (YGTL) contributes to the substrate binding site. Glutamate 73 functions as the Proton acceptor in the catalytic mechanism.

It belongs to the gamma-glutamylcyclotransferase family.

Putative gamma-glutamylcyclotransferase. The protein is Putative gamma-glutamylcyclotransferase VC_2546 of Vibrio cholerae serotype O1 (strain ATCC 39315 / El Tor Inaba N16961).